We begin with the raw amino-acid sequence, 241 residues long: Uridylate kinase (241 aa).

14-17 lines the ATP pocket; that stretch reads KLSG. Residue Gly-56 coordinates UMP. 2 residues coordinate ATP: Gly-57 and Arg-61. Residues Asp-77 and 138-145 contribute to the UMP site; that span reads TGNPFFTT. 3 residues coordinate ATP: Thr-165, Tyr-171, and Asp-174.

This sequence belongs to the UMP kinase family. In terms of assembly, homohexamer.

It localises to the cytoplasm. It catalyses the reaction UMP + ATP = UDP + ADP. The protein operates within pyrimidine metabolism; CTP biosynthesis via de novo pathway; UDP from UMP (UMPK route): step 1/1. With respect to regulation, inhibited by UTP. Functionally, catalyzes the reversible phosphorylation of UMP to UDP. The protein is Uridylate kinase of Psychrobacter arcticus (strain DSM 17307 / VKM B-2377 / 273-4).